The primary structure comprises 427 residues: Glutamate-1-semialdehyde 2,1-aminomutase (427 aa).

At Lys-268 the chain carries N6-(pyridoxal phosphate)lysine.

It belongs to the class-III pyridoxal-phosphate-dependent aminotransferase family. HemL subfamily. Pyridoxal 5'-phosphate is required as a cofactor.

The protein resides in the cytoplasm. The enzyme catalyses (S)-4-amino-5-oxopentanoate = 5-aminolevulinate. It participates in porphyrin-containing compound metabolism; protoporphyrin-IX biosynthesis; 5-aminolevulinate from L-glutamyl-tRNA(Glu): step 2/2. This chain is Glutamate-1-semialdehyde 2,1-aminomutase, found in Methanococcus maripaludis (strain C5 / ATCC BAA-1333).